A 160-amino-acid chain; its full sequence is F-box protein At1g15015 (160 aa).

An F-box domain is found at 1–44; it reads MDVTLPHHVVEDILERLPVKTLRKFKCVCSTWRSTIDSQRFKDR.

This is F-box protein At1g15015 from Arabidopsis thaliana (Mouse-ear cress).